The sequence spans 244 residues: Ferric aerobactin reductase IutB (244 aa).

[2Fe-2S] cluster is bound by residues cysteine 220, cysteine 221, cysteine 232, and cysteine 235.

In terms of assembly, monomer. The cofactor is [2Fe-2S] cluster.

Its subcellular location is the cytoplasm. It catalyses the reaction 2 a Fe(II)-siderophore + NAD(+) + H(+) = 2 a Fe(III)-siderophore + NADH. It carries out the reaction 2 a Fe(II)-siderophore + NADP(+) + H(+) = 2 a Fe(III)-siderophore + NADPH. In terms of biological role, ferric-siderophore reductase involved in iron removal from the siderophores after their transport into the cell. Acts as a major ferric-aerobactin reductase catalyzing the reduction of Fe(3+)-aerobactin, a citrate-hydroxamate siderophore produced by other bacteria. Catalyzes reduction of Fe(3+)-vulnibactin, a catecholate siderophore synthesized by V.vulnificus, in the absence of VuuB. Catalyzes reduction of ferrioxamine B and Fe(3+)-vibriobactin in vitro. No activity with Fe(3+)-enterobactin. Catalyzes reduction of ferric chelating compound Fe(3+)-nitrilotriacetic acid (NTA) in the presence of NADH, NADPH or reduced glutathione (GSH) as its electron donor in vitro. Also catalyzes reduction of ferric chelating compounds Fe(3+)-citrate and Fe(3+)-EDTA as well as non-complexed FeCl3 in the presence of GSH as its electron donor in vitro. Highest activity with Fe(3+)-NTA as electron acceptor and GSH as donor. This Vibrio vulnificus protein is Ferric aerobactin reductase IutB.